Consider the following 454-residue polypeptide: MNNMHSQTTIAAIATPPGRGGVGVIRLSGPKAYDIAQKLTQKNLPEARMAGFRKFYDADGSIMDEGIVLCFPNPHSFTGEDVVELQGHGGPVIQNALLGRLFELGAIAAKAGEFSMRAFENGKMDLVQAEAIADLIDATSQAAARSAVRSLQGAFSTKINTVLEKLIYLRLHVEAAIDFPEEEIDFLADGKILALLEDVQQSVHAVQTSARQGQLLREGLQVVIAGKPNAGKSSLLNALAGVERAIVTDIAGTTRDVLHEKISLNGLPITLTDTAGLRETGDIVEKEGIRRAIKEIEQADLLLLVYDLNQGDDPLKLAQEYFSEHIEPRRLMLIGNKCDLTGQSAEISDYQGFRHITVSAKQEMGVQGLVDAITAHAGFHPEEDTFIARTRHLDAMKRTQLYLAEAREQLVVFNAGELVAESLRLAQNALGEITGDFSADDLLGKIFGSFCIGK.

(6S)-5-formyl-5,6,7,8-tetrahydrofolate-binding residues include R26, E84, and K123. Residues 219-378 (GLQVVIAGKP…LVDAITAHAG (160 aa)) form the TrmE-type G domain. N229 lines the K(+) pocket. GTP is bound by residues 229-234 (NAGKSS), 248-254 (TDIAGTT), and 273-276 (DTAG). Residue S233 participates in Mg(2+) binding. The K(+) site is built by T248, I250, and T253. T254 contributes to the Mg(2+) binding site. K454 contributes to the (6S)-5-formyl-5,6,7,8-tetrahydrofolate binding site.

It belongs to the TRAFAC class TrmE-Era-EngA-EngB-Septin-like GTPase superfamily. TrmE GTPase family. As to quaternary structure, homodimer. Heterotetramer of two MnmE and two MnmG subunits. It depends on K(+) as a cofactor.

The protein localises to the cytoplasm. Exhibits a very high intrinsic GTPase hydrolysis rate. Involved in the addition of a carboxymethylaminomethyl (cmnm) group at the wobble position (U34) of certain tRNAs, forming tRNA-cmnm(5)s(2)U34. The polypeptide is tRNA modification GTPase MnmE (Acinetobacter baumannii (strain ATCC 17978 / DSM 105126 / CIP 53.77 / LMG 1025 / NCDC KC755 / 5377)).